A 361-amino-acid chain; its full sequence is ETS translocation variant 3-like protein (361 aa).

The ETS DNA-binding region spans 39–120 (IQLWHFILEL…KGKRFTYKFN (82 aa)). The interval 178 to 201 (LTGQQTPRGPPETSGDKKGSSSSV) is disordered.

This sequence belongs to the ETS family.

The protein localises to the nucleus. Transcriptional regulator. The chain is ETS translocation variant 3-like protein (ETV3L) from Homo sapiens (Human).